The sequence spans 69 residues: Light-harvesting protein B-1015 beta chain (69 aa).

Residues 2–21 (ADLKPSLTGLTEEEAKEFHG) lie on the Cytoplasmic side of the membrane. Positions 20 and 38 each coordinate a bacteriochlorophyll. Residues 22–44 (IFVTSTVLYLATAVIVHYLVWTA) form a helical membrane-spanning segment. Residues 45–56 (RPWIAPIPKGWV) are Periplasmic-facing. The propeptide occupies 57-69 (NLEGVQSALSYLV).

It belongs to the antenna complex beta subunit family. In terms of assembly, the core complex is formed by different alpha and beta chains, binding bacteriochlorophyll molecules, and arranged most probably in tetrameric structures disposed around the reaction center. The non-pigmented gamma chains may constitute additional components.

The protein resides in the cell inner membrane. Its function is as follows. Antenna complexes are light-harvesting systems, which transfer the excitation energy to the reaction centers. This Blastochloris viridis (Rhodopseudomonas viridis) protein is Light-harvesting protein B-1015 beta chain (pufB).